The chain runs to 138 residues: Transcriptional regulator MraZ (138 aa).

2 consecutive SpoVT-AbrB domains span residues glutamate 3–glutamate 45 and alanine 74–arginine 117.

This sequence belongs to the MraZ family. As to quaternary structure, forms oligomers.

The protein resides in the cytoplasm. Its subcellular location is the nucleoid. The polypeptide is Transcriptional regulator MraZ (Symbiobacterium thermophilum (strain DSM 24528 / JCM 14929 / IAM 14863 / T)).